We begin with the raw amino-acid sequence, 658 residues long: MMPRLLFRAWPRCPSLVLGAPSRPLSAVSGPDDYLQHSIVPTMHYQDSLPRLPIPKLEDTMKRYLNAQKPLLDDSQFRRTEALCKNFETGVGKELHAHLLAQDKQNKHTSYISGPWFDMYLTARDSIVLNFNPFMAFNPDPKSEYNDQLTRATNLTVSAVRFLKTLQAGLLEPEVFHLNPSKSDTDAFKRLIRFVPPSLSWYGAYLVNAYPLDMSQYFRLFNSTRIPRPNRDELFTDTKARHLLVLRKGHFYVFDVLDQDGNIVNPLEIQAHLKYILSDSSPVPEFPVAYLTSENRDVWAELRQKLIFDGNEETLKKVDSAVFCLCLDDFPMKDLIHLSHTMLHGDGTNRWFDKSFNLIVAEDGTAAVHFEHSWGDGVAVLRFFNEVFRDSTQTPAITPQSQPAATNSSASVETLSFNLSGALKAGITAAKEKFDTTVKTLSIDSIQFQRGGKEFLKKKQLSPDAVAQLAFQMAFLRQYGQTVATYESCSTAAFKHGRTETIRPASIFTKRCSEAFVRDPSKHSVGELQHMMAECSKYHGQLTKEAAMGQGFDRHLYALRYLATARGLNLPELYLDPAYQQMNHNILSTSTLNSPAVSLGGFAPVVPDGFGIAYAVHDDWIGCNVSSYSGRNAREFLHCVQKCLEDIFDALEGKAIKT.

The transit peptide at 1–25 directs the protein to the mitochondrion; the sequence is MMPRLLFRAWPRCPSLVLGAPSRPL. Residues 26 to 178 lie on the Mitochondrial matrix side of the membrane; sequence SAVSGPDDYL…GLLEPEVFHL (153 aa). N6-succinyllysine occurs at positions 69 and 85. Residues 179–208 constitute an intramembrane region (note=Mitochondrial inner membrane); that stretch reads NPSKSDTDAFKRLIRFVPPSLSWYGAYLVN. Topologically, residues 209 to 658 are mitochondrial matrix; sequence AYPLDMSQYF…DALEGKAIKT (450 aa). An N6-acetyllysine; alternate modification is found at Lys239. Lys239 bears the N6-succinyllysine; alternate mark. An N6-acetyllysine modification is found at Lys305. The Proton acceptor role is filled by His372. N6-succinyllysine is present on residues Lys424 and Lys439. 452–464 is a binding site for CoA; that stretch reads GKEFLKKKQLSPD. (R)-carnitine contacts are provided by Tyr486, Ser488, and Thr499. N6-acetyllysine; alternate occurs at positions 510 and 544. Lys510 and Lys544 each carry N6-succinyllysine; alternate.

It belongs to the carnitine/choline acetyltransferase family.

It localises to the mitochondrion inner membrane. The enzyme catalyses (R)-carnitine + hexadecanoyl-CoA = O-hexadecanoyl-(R)-carnitine + CoA. It carries out the reaction octanoyl-CoA + (R)-carnitine = O-octanoyl-(R)-carnitine + CoA. The catalysed reaction is decanoyl-CoA + (R)-carnitine = O-decanoyl-(R)-carnitine + CoA. It catalyses the reaction dodecanoyl-CoA + (R)-carnitine = O-dodecanoyl-R-carnitine + CoA. The enzyme catalyses tetradecanoyl-CoA + (R)-carnitine = O-tetradecanoyl-(R)-carnitine + CoA. It carries out the reaction (R)-carnitine + octadecanoyl-CoA = O-octadecanoyl-(R)-carnitine + CoA. The catalysed reaction is eicosanoyl-CoA + (R)-carnitine = O-eicosanoyl-(R)-carnitine + CoA. It catalyses the reaction (9Z)-tetradecenoyl-CoA + (R)-carnitine = O-(9Z)-tetradecenoyl-(R)-carnitine + CoA. The enzyme catalyses (5Z)-tetradecenoyl-CoA + (R)-carnitine = O-(5Z)-tetradecenoyl-(R)-carnitine + CoA. It carries out the reaction (R)-carnitine + (9Z)-octadecenoyl-CoA = O-(9Z)-octadecenoyl-(R)-carnitine + CoA. The catalysed reaction is 4,8-dimethylnonanoyl-CoA + (R)-carnitine = O-4,8-dimethylnonanoyl-(R)-carnitine + CoA. Its pathway is lipid metabolism; fatty acid beta-oxidation. Its function is as follows. Involved in the intramitochondrial synthesis of acylcarnitines from accumulated acyl-CoA metabolites. Reconverts acylcarnitines back into the respective acyl-CoA esters that can then undergo beta-oxidation, an essential step for the mitochondrial uptake of long-chain fatty acids and their subsequent beta-oxidation in the mitochondrion. Active with medium (C8-C12) and long-chain (C14-C18) acyl-CoA esters. This chain is Carnitine O-palmitoyltransferase 2, mitochondrial, found in Rattus norvegicus (Rat).